A 561-amino-acid polypeptide reads, in one-letter code: Carbohydrate sulfotransferase 15 (561 aa).

The Cytoplasmic portion of the chain corresponds to 1 to 80; sequence MRHCINCCIQ…FLRFKKGKRC (80 aa). A helical; Signal-anchor for type II membrane protein transmembrane segment spans residues 81 to 101; sequence SLVFGLIIMTLVMASYILSGA. Residues 102-561 lie on the Lumenal side of the membrane; sequence HQELLISSPF…ADEAFAWKTT (460 aa). A 3'-phosphoadenylyl sulfate-binding site is contributed by 263–267; that stretch reads KCGTT. Asparagine 364 carries an N-linked (GlcNAc...) asparagine glycan. 3'-phosphoadenylyl sulfate contacts are provided by arginine 392 and serine 400.

This sequence belongs to the sulfotransferase 1 family. As to quaternary structure, homodimer; disulfide-linked (Potential). The relevance of homodimerization is however unsure. May interact with phosphorylated proteins in resting B-cells, including HCK. A divalent metal cation is required as a cofactor. It depends on glutathione as a cofactor. Glycosylated. As to expression, expressed in B-cell-enriched tissues but not in fetal or adult thymus. Expressed in fetal and adult spleen, lymph node, tonsil, bone marrow and peripheral leukocytes. Not expressed in T-cells. In pro-B, pre-B, and mature B-cell lines, it colocalizes with RAG1.

The protein resides in the golgi apparatus membrane. The enzyme catalyses dermatan 4'-sulfate + n 3'-phosphoadenylyl sulfate = dermatan 4',6'-bissulfate + n adenosine 3',5'-bisphosphate + n H(+). The catalysed reaction is chondroitin 4'-sulfate + n 3'-phosphoadenylyl sulfate = chondroitin 4',6'-bissulfate + n adenosine 3',5'-bisphosphate + n H(+). Inhibited by phenyl beta-GalNAc(4,6-SO(4)). Functionally, sulfotransferase that transfers sulfate from 3'-phosphoadenosine 5'-phosphosulfate (PAPS) to the C-6 hydroxyl group of the GalNAc 4-sulfate residue of chondroitin sulfate A and forms chondroitin sulfate E containing GlcA-GalNAc(4,6-SO(4)) repeating units. It also transfers sulfate to a unique non-reducing terminal sequence, GalNAc(4SO4)-GlcA(2SO4)-GalNAc(6SO4), to yield a highly sulfated structure similar to the structure found in thrombomodulin chondroitin sulfate. May also act as a B-cell receptor involved in BCR ligation-mediated early activation that mediate regulatory signals key to B-cell development and/or regulation of B-cell-specific RAG expression; however such results are unclear in vivo. In Homo sapiens (Human), this protein is Carbohydrate sulfotransferase 15 (CHST15).